Reading from the N-terminus, the 189-residue chain is UPF0316 protein Sca_1484 (189 aa).

3 consecutive transmembrane segments (helical) span residues 8–28 (PWLM…CLTV), 40–60 (VAAA…GLVM), and 66–86 (FQNI…GMKI).

This sequence belongs to the UPF0316 family.

The protein resides in the cell membrane. This Staphylococcus carnosus (strain TM300) protein is UPF0316 protein Sca_1484.